Consider the following 865-residue polypeptide: Aconitate hydratase B (865 aa).

Substrate is bound by residues R191, 244–246 (SSR), 414–416 (QDT), and S498. Positions 710, 769, and 772 each coordinate [4Fe-4S] cluster. Substrate-binding residues include R791 and R796.

The protein belongs to the aconitase/IPM isomerase family. Monomer. [4Fe-4S] cluster serves as cofactor.

The enzyme catalyses citrate = D-threo-isocitrate. It catalyses the reaction (2S,3R)-3-hydroxybutane-1,2,3-tricarboxylate = 2-methyl-cis-aconitate + H2O. It functions in the pathway carbohydrate metabolism; tricarboxylic acid cycle; isocitrate from oxaloacetate: step 2/2. It participates in organic acid metabolism; propanoate degradation. Functionally, involved in the catabolism of short chain fatty acids (SCFA) via the tricarboxylic acid (TCA)(acetyl degradation route) and the 2-methylcitrate cycle I (propionate degradation route). Catalyzes the reversible isomerization of citrate to isocitrate via cis-aconitate. Also catalyzes the hydration of 2-methyl-cis-aconitate to yield (2R,3S)-2-methylisocitrate. The apo form of AcnB functions as a RNA-binding regulatory protein which regulates FliC synthesis via interaction with the ftsH transcript to decrease the intracellular levels of FtsH. The lower levels of FtsH protease activity then influence sigma-32, DnaK and ultimately FliC production. The chain is Aconitate hydratase B (acnB) from Salmonella typhimurium (strain LT2 / SGSC1412 / ATCC 700720).